The primary structure comprises 224 residues: Transcriptional regulatory protein DltR (224 aa).

The 115-residue stretch at 2–116 (RLLVVEDEKS…ELLARIRLRT (115 aa)) folds into the Response regulatory domain. Aspartate 51 bears the 4-aspartylphosphate mark. The segment at residues 124–222 (ANQLRLGNIR…TKGFGYSLEE (99 aa)) is a DNA-binding region (ompR/PhoB-type).

In terms of processing, phosphorylated by DltS.

Its subcellular location is the cytoplasm. Its function is as follows. Member of the two-component regulatory system DltS/DltR. Regulates the expression of the dlt operon. This chain is Transcriptional regulatory protein DltR (dltR), found in Streptococcus agalactiae serotype III (strain NEM316).